Here is a 252-residue protein sequence, read N- to C-terminus: Ribosomal RNA small subunit methyltransferase J (252 aa).

Residues arginine 104 to aspartate 105, glutamate 120 to arginine 121, and aspartate 174 contribute to the S-adenosyl-L-methionine site.

The protein belongs to the methyltransferase superfamily. RsmJ family.

It localises to the cytoplasm. It carries out the reaction guanosine(1516) in 16S rRNA + S-adenosyl-L-methionine = N(2)-methylguanosine(1516) in 16S rRNA + S-adenosyl-L-homocysteine + H(+). In terms of biological role, specifically methylates the guanosine in position 1516 of 16S rRNA. The sequence is that of Ribosomal RNA small subunit methyltransferase J from Mannheimia succiniciproducens (strain KCTC 0769BP / MBEL55E).